We begin with the raw amino-acid sequence, 323 residues long: Ficolin-2 (323 aa).

The signal sequence occupies residues 1–26 (MDTRGVAAAMRPLVLLVAFLCTAAPA). One can recognise a Collagen-like domain in the interval 52–102 (GLPGAAGPKGEAGASGPKGGQGPPGAPGEPGPPGPKGDRGEKGEPGPKGES). The segment covering 55–66 (GAAGPKGEAGAS) has biased composition (low complexity). A disordered region spans residues 55-107 (GAAGPKGEAGASGPKGGQGPPGAPGEPGPPGPKGDRGEKGEPGPKGESWETEQ). Over residues 75 to 86 (PGAPGEPGPPGP) the composition is skewed to pro residues. A compositionally biased stretch (basic and acidic residues) spans 87 to 102 (KGDRGEKGEPGPKGES). One can recognise a Fibrinogen C-terminal domain in the interval 106 to 323 (EQCLTGPRTC…KVSEMKFRAT (218 aa)). 2 cysteine pairs are disulfide-bonded: C108–C136 and C115–C143. A glycan (N-linked (GlcNAc...) asparagine) is linked at N249. D259, D261, and S265 together coordinate Ca(2+). Residues C267 and C280 are joined by a disulfide bond. Residues N302 and N310 are each glycosylated (N-linked (GlcNAc...) asparagine).

Belongs to the ficolin lectin family. Homotrimer. Interacts with elastin. Interacts with MASP1 and MASP2. Mainly expressed in skeletal muscle.

It localises to the secreted. In terms of biological role, may function in innate immunity through activation of the lectin complement pathway. Calcium-dependent and GlcNAc-binding lectin. The chain is Ficolin-2 (FCN2) from Sus scrofa (Pig).